A 547-amino-acid chain; its full sequence is Chaperonin GroEL (547 aa).

ATP-binding positions include 30 to 33, Lys-51, 87 to 91, Gly-415, and Asp-496; these read TLGP and DGTTT.

It belongs to the chaperonin (HSP60) family. As to quaternary structure, forms a cylinder of 14 subunits composed of two heptameric rings stacked back-to-back. Interacts with the co-chaperonin GroES.

It localises to the cytoplasm. It carries out the reaction ATP + H2O + a folded polypeptide = ADP + phosphate + an unfolded polypeptide.. Together with its co-chaperonin GroES, plays an essential role in assisting protein folding. The GroEL-GroES system forms a nano-cage that allows encapsulation of the non-native substrate proteins and provides a physical environment optimized to promote and accelerate protein folding. This chain is Chaperonin GroEL, found in Mannheimia succiniciproducens (strain KCTC 0769BP / MBEL55E).